A 951-amino-acid chain; its full sequence is Replication protein A 70 kDa DNA-binding subunit C (951 aa).

The interval 139–172 (AQTNNGTYSGGASMLGPSVAPRAEQAASNSSYGG) is disordered. The OB DNA-binding region spans 320-403 (WTIKARVTAK…NTLNHDYEIT (84 aa)). A C4-type zinc finger spans residues 612–639 (CPKLLPVGRQCNKKAINNGDGMWHCDRC).

The protein belongs to the replication factor A protein 1 family. Heterotrimer of RPA1, RPA2 and RPA3 (canonical replication protein A complex). Interacts with RPA2C.

Its subcellular location is the nucleus. Functionally, component of the replication protein A complex (RPA) required for DNA recombination, repair and replication. The activity of RPA is mediated by single-stranded DNA binding and protein interactions. Probably involved in repair of double-strand DNA breaks (DSBs) induced by genotoxic stresses. This Oryza sativa subsp. japonica (Rice) protein is Replication protein A 70 kDa DNA-binding subunit C (RPA1C).